Reading from the N-terminus, the 219-residue chain is Thiamine-phosphate synthase (219 aa).

4-amino-2-methyl-5-(diphosphooxymethyl)pyrimidine-binding positions include 44–48 (QFREK) and N79. Mg(2+) contacts are provided by D80 and D99. S117 lines the 4-amino-2-methyl-5-(diphosphooxymethyl)pyrimidine pocket. 143-145 (TST) contacts 2-[(2R,5Z)-2-carboxy-4-methylthiazol-5(2H)-ylidene]ethyl phosphate. K146 provides a ligand contact to 4-amino-2-methyl-5-(diphosphooxymethyl)pyrimidine. 2-[(2R,5Z)-2-carboxy-4-methylthiazol-5(2H)-ylidene]ethyl phosphate is bound by residues G175 and 195–196 (IS).

It belongs to the thiamine-phosphate synthase family. It depends on Mg(2+) as a cofactor.

It carries out the reaction 2-[(2R,5Z)-2-carboxy-4-methylthiazol-5(2H)-ylidene]ethyl phosphate + 4-amino-2-methyl-5-(diphosphooxymethyl)pyrimidine + 2 H(+) = thiamine phosphate + CO2 + diphosphate. The enzyme catalyses 2-(2-carboxy-4-methylthiazol-5-yl)ethyl phosphate + 4-amino-2-methyl-5-(diphosphooxymethyl)pyrimidine + 2 H(+) = thiamine phosphate + CO2 + diphosphate. It catalyses the reaction 4-methyl-5-(2-phosphooxyethyl)-thiazole + 4-amino-2-methyl-5-(diphosphooxymethyl)pyrimidine + H(+) = thiamine phosphate + diphosphate. It functions in the pathway cofactor biosynthesis; thiamine diphosphate biosynthesis; thiamine phosphate from 4-amino-2-methyl-5-diphosphomethylpyrimidine and 4-methyl-5-(2-phosphoethyl)-thiazole: step 1/1. Its function is as follows. Condenses 4-methyl-5-(beta-hydroxyethyl)thiazole monophosphate (THZ-P) and 2-methyl-4-amino-5-hydroxymethyl pyrimidine pyrophosphate (HMP-PP) to form thiamine monophosphate (TMP). The polypeptide is Thiamine-phosphate synthase (Bacillus cereus (strain ATCC 14579 / DSM 31 / CCUG 7414 / JCM 2152 / NBRC 15305 / NCIMB 9373 / NCTC 2599 / NRRL B-3711)).